Reading from the N-terminus, the 179-residue chain is Large ribosomal subunit protein uL5 (179 aa).

This sequence belongs to the universal ribosomal protein uL5 family. Part of the 50S ribosomal subunit; part of the 5S rRNA/L5/L18/L25 subcomplex. Contacts the 5S rRNA and the P site tRNA. Forms a bridge to the 30S subunit in the 70S ribosome.

Its function is as follows. This is one of the proteins that bind and probably mediate the attachment of the 5S RNA into the large ribosomal subunit, where it forms part of the central protuberance. In the 70S ribosome it contacts protein S13 of the 30S subunit (bridge B1b), connecting the 2 subunits; this bridge is implicated in subunit movement. Contacts the P site tRNA; the 5S rRNA and some of its associated proteins might help stabilize positioning of ribosome-bound tRNAs. In Alkaliphilus metalliredigens (strain QYMF), this protein is Large ribosomal subunit protein uL5.